The sequence spans 513 residues: Light-independent protochlorophyllide reductase subunit B (513 aa).

Residue aspartate 36 participates in [4Fe-4S] cluster binding. Aspartate 299 acts as the Proton donor in catalysis. 434 to 435 (GM) contributes to the substrate binding site.

Belongs to the ChlB/BchB/BchZ family. Protochlorophyllide reductase is composed of three subunits; ChlL, ChlN and ChlB. Forms a heterotetramer of two ChlB and two ChlN subunits. Requires [4Fe-4S] cluster as cofactor.

Its subcellular location is the plastid. It localises to the chloroplast. It carries out the reaction chlorophyllide a + oxidized 2[4Fe-4S]-[ferredoxin] + 2 ADP + 2 phosphate = protochlorophyllide a + reduced 2[4Fe-4S]-[ferredoxin] + 2 ATP + 2 H2O. Its pathway is porphyrin-containing compound metabolism; chlorophyll biosynthesis (light-independent). In terms of biological role, component of the dark-operative protochlorophyllide reductase (DPOR) that uses Mg-ATP and reduced ferredoxin to reduce ring D of protochlorophyllide (Pchlide) to form chlorophyllide a (Chlide). This reaction is light-independent. The NB-protein (ChlN-ChlB) is the catalytic component of the complex. The sequence is that of Light-independent protochlorophyllide reductase subunit B from Cycas taitungensis (Prince sago).